A 796-amino-acid polypeptide reads, in one-letter code: Probable coatomer subunit beta' (796 aa).

WD repeat units lie at residues L4 to N42, Q46 to N84, G88 to N126, W131 to S170, G172 to D214, and K218 to H256.

Belongs to the WD repeat COPB2 family. As to quaternary structure, oligomeric complex that consists of at least the alpha, beta, beta', gamma, delta, epsilon and zeta subunits.

Its subcellular location is the cytoplasm. It is found in the golgi apparatus membrane. The protein resides in the cytoplasmic vesicle. The protein localises to the COPI-coated vesicle membrane. Functionally, the coatomer is a cytosolic protein complex that binds to dilysine motifs and reversibly associates with Golgi non-clathrin-coated vesicles, which further mediate biosynthetic protein transport from the ER, via the Golgi up to the trans Golgi network. Coatomer complex is required for budding from Golgi membranes, and is essential for the retrograde Golgi-to-ER transport of dilysine-tagged proteins. This Schizosaccharomyces pombe (strain 972 / ATCC 24843) (Fission yeast) protein is Probable coatomer subunit beta' (sec27).